The primary structure comprises 394 residues: Phosphoglycerate kinase (394 aa).

Substrate is bound by residues 21–23 (DLN), Arg-37, 60–63 (HLGR), Arg-115, and Arg-148. ATP-binding positions include Lys-199, Glu-321, and 347-350 (GGDT).

The protein belongs to the phosphoglycerate kinase family. In terms of assembly, monomer.

It localises to the cytoplasm. It carries out the reaction (2R)-3-phosphoglycerate + ATP = (2R)-3-phospho-glyceroyl phosphate + ADP. The protein operates within carbohydrate degradation; glycolysis; pyruvate from D-glyceraldehyde 3-phosphate: step 2/5. This is Phosphoglycerate kinase from Azoarcus sp. (strain BH72).